Here is a 292-residue protein sequence, read N- to C-terminus: Nitrogenase iron protein (292 aa).

10–17 (GKGGIGKS) contacts ATP. A [4Fe-4S] cluster-binding site is contributed by C98. Position 101 is an ADP-ribosylarginine; by dinitrogenase reductase ADP-ribosyltransferase (R101). C133 is a binding site for [4Fe-4S] cluster.

The protein belongs to the NifH/BchL/ChlL family. Homodimer. Requires [4Fe-4S] cluster as cofactor. The reversible ADP-ribosylation of Arg-101 inactivates the nitrogenase reductase and regulates nitrogenase activity.

It catalyses the reaction N2 + 8 reduced [2Fe-2S]-[ferredoxin] + 16 ATP + 16 H2O = H2 + 8 oxidized [2Fe-2S]-[ferredoxin] + 2 NH4(+) + 16 ADP + 16 phosphate + 6 H(+). Functionally, the key enzymatic reactions in nitrogen fixation are catalyzed by the nitrogenase complex, which has 2 components: the iron protein and the molybdenum-iron protein. In Teredinibacter turnerae (strain ATCC 39867 / T7901), this protein is Nitrogenase iron protein.